The chain runs to 335 residues: Deoxyhypusine hydroxylase (335 aa).

HEAT-like PBS-type repeat units lie at residues 71-97 (LKHELAYCLGQTRNPASLPFLQQVAKD), 104-130 (CRHEAAEALGALGYEDSLEILKALRDN), 200-233 (LRYRAMFALRDLASPPDLPTATRAVEALAKGLKD), 238-264 (FRHEIAFVFGQLCHPASIPSLTEALSN), and 271-298 (VRHEAAEALGSLGDYEGVEETLRKFLND). Fe cation is bound by residues His73, Glu74, His106, and Glu107. The Fe cation site is built by His240, Glu241, His273, and Glu274.

This sequence belongs to the deoxyhypusine hydroxylase family. It depends on Fe(2+) as a cofactor.

The protein resides in the cytoplasm. It localises to the nucleus. It carries out the reaction [eIF5A protein]-deoxyhypusine + AH2 + O2 = [eIF5A protein]-hypusine + A + H2O. The protein operates within protein modification; eIF5A hypusination. In terms of biological role, catalyzes the hydroxylation of the N(6)-(4-aminobutyl)-L-lysine intermediate to form hypusine, an essential post-translational modification only found in mature eIF-5A factor. This is Deoxyhypusine hydroxylase (lia1) from Aspergillus fumigatus (strain ATCC MYA-4609 / CBS 101355 / FGSC A1100 / Af293) (Neosartorya fumigata).